Here is a 248-residue protein sequence, read N- to C-terminus: Ras-like protein family member 11B (248 aa).

The tract at residues 29-246 (AGRRLVKIAV…ALSAKVRTVT (218 aa)) is small GTPase-like. GTP is bound by residues 40–47 (GASGVGKT), 87–91 (DTPGI), and 152–155 (NKAD). The disordered stretch occupies residues 205-229 (QQPSGTPEKRRTSLIPRPKSPNMQD).

Belongs to the small GTPase superfamily. Ras family.

It catalyses the reaction GTP + H2O = GDP + phosphate + H(+). This is Ras-like protein family member 11B from Bos taurus (Bovine).